The primary structure comprises 375 residues: tRNA-specific 2-thiouridylase MnmA (375 aa).

ATP contacts are provided by residues 12 to 19 (GMSGGVDS) and methionine 38. Residues 98–100 (NPD) are interaction with target base in tRNA. Residue cysteine 103 is the Nucleophile of the active site. Cysteine 103 and cysteine 200 are disulfide-bonded. Residue glycine 127 participates in ATP binding. An interaction with tRNA region spans residues 150 to 152 (KDQ). Cysteine 200 acts as the Cysteine persulfide intermediate in catalysis. Positions 312-313 (RY) are interaction with tRNA.

Belongs to the MnmA/TRMU family.

It localises to the cytoplasm. It carries out the reaction S-sulfanyl-L-cysteinyl-[protein] + uridine(34) in tRNA + AH2 + ATP = 2-thiouridine(34) in tRNA + L-cysteinyl-[protein] + A + AMP + diphosphate + H(+). Its function is as follows. Catalyzes the 2-thiolation of uridine at the wobble position (U34) of tRNA, leading to the formation of s(2)U34. This chain is tRNA-specific 2-thiouridylase MnmA, found in Lactobacillus gasseri (strain ATCC 33323 / DSM 20243 / BCRC 14619 / CIP 102991 / JCM 1131 / KCTC 3163 / NCIMB 11718 / NCTC 13722 / AM63).